The chain runs to 903 residues: Centrobin (903 aa).

The segment covering 1 to 10 has biased composition (polar residues); it reads MATSADSPSS. Residues 1–34 form a disordered region; the sequence is MATSADSPSSPLGAEDLLSDSSEPPGLNQVSSEV. At serine 80 the chain carries Phosphoserine. 6 disordered regions span residues 110-140, 471-493, 568-597, 669-704, 772-799, and 837-903; these read LQTS…DSDS, LRQA…GQHQ, LSTT…KEER, SALG…LPPA, RVPE…DGLT, and SGTD…GVWR. Positions 196–560 form a coiled coil; sequence RRKHCERHIQ…ERLQAMLQAH (365 aa). Residues 365 to 903 are required for centrosome localization; sequence QEHQLKEHYQ…SMRSRGGVWR (539 aa). A compositionally biased stretch (pro residues) spans 572–590; sequence LPPPNPPAPPAGPSSPGPQ. Residues 675–685 show a composition bias toward basic and acidic residues; it reads HPDHRAERPFP. A compositionally biased stretch (low complexity) spans 778-791; it reads SSHSQGSGPSSGSP. A Phosphoserine modification is found at serine 790. The span at 837–863 shows a compositional bias: basic and acidic residues; the sequence is SGTDGRGDNVPRRNTDSRLGEIPRKEI.

As to quaternary structure, interacts with LYST. In terms of tissue distribution, widely expressed (at protein level). Highly expressed in testis. Also expressed in spleen, thymus, prostate, small intestine, colon and peripheral blood leukocytes.

It localises to the cytoplasm. It is found in the cytoskeleton. The protein resides in the microtubule organizing center. The protein localises to the centrosome. Its subcellular location is the centriole. Its function is as follows. Required for centriole duplication. Inhibition of centriole duplication leading to defects in cytokinesis. The sequence is that of Centrobin (CNTROB) from Homo sapiens (Human).